We begin with the raw amino-acid sequence, 439 residues long: Microfibrillar-associated protein 1 (439 aa).

Positions 1 to 17 (MSVPSSLMKQPPIQSTA) are enriched in polar residues. The interval 1 to 200 (MSVPSSLMKQ…SEDEMEPRLK (200 aa)) is disordered. An N-acetylserine modification is found at serine 2. Residues 23 to 34 (RNEKGEISMEKV) are compositionally biased toward basic and acidic residues. Serine 52 and serine 53 each carry phosphoserine. Residues 61 to 70 (QFIKKAKEQE) are compositionally biased toward basic and acidic residues. Residue lysine 67 forms a Glycyl lysine isopeptide (Lys-Gly) (interchain with G-Cter in SUMO2) linkage. Residues 71–81 (AEPEEQEEDSS) are compositionally biased toward acidic residues. A phosphoserine mark is found at serine 94, serine 116, serine 118, serine 132, and serine 133. Composition is skewed to acidic residues over residues 112–122 (VVGESDSEVEG) and 131–144 (DSSE…DEEE). The segment covering 145-163 (IERRRGMMRQRAQERKNEE) has biased composition (basic and acidic residues). The span at 178–195 (ESESESEYEEYTDSEDEM) shows a compositional bias: acidic residues. Residue lysine 249 forms a Glycyl lysine isopeptide (Lys-Gly) (interchain with G-Cter in SUMO2) linkage. Threonine 267 bears the Phosphothreonine mark. Residue lysine 357 forms a Glycyl lysine isopeptide (Lys-Gly) (interchain with G-Cter in SUMO2) linkage. The residue at position 361 (serine 361) is a Phosphoserine. Residues lysine 371, lysine 381, lysine 415, and lysine 418 each participate in a glycyl lysine isopeptide (Lys-Gly) (interchain with G-Cter in SUMO2) cross-link. A Phosphoserine modification is found at serine 432.

Belongs to the MFAP1 family. As to quaternary structure, component of the spliceosome B complex. Interacts with PRPF38A (via N-terminal interaction domain).

It is found in the nucleus. Its function is as follows. Involved in pre-mRNA splicing as a component of the spliceosome. The sequence is that of Microfibrillar-associated protein 1 from Bos taurus (Bovine).